We begin with the raw amino-acid sequence, 126 residues long: Nascent polypeptide-associated complex protein (126 aa).

The NAC-A/B domain occupies 10 to 77; it reads PRMMKQMQKM…AKKVAKEEEK (68 aa).

Belongs to the NAC-alpha family. In terms of assembly, homodimer. Interacts with the ribosome. Binds ribosomal RNA.

Contacts the emerging nascent chain on the ribosome. This Methanococcus maripaludis (strain C7 / ATCC BAA-1331) protein is Nascent polypeptide-associated complex protein.